The sequence spans 86 residues: Putative membrane protein insertion efficiency factor (86 aa).

It belongs to the UPF0161 family.

The protein localises to the cell inner membrane. Its function is as follows. Could be involved in insertion of integral membrane proteins into the membrane. This chain is Putative membrane protein insertion efficiency factor, found in Oleidesulfovibrio alaskensis (strain ATCC BAA-1058 / DSM 17464 / G20) (Desulfovibrio alaskensis).